A 123-amino-acid polypeptide reads, in one-letter code: WAP four-disulfide core domain protein 2 (123 aa).

Positions methionine 1–glycine 26 are cleaved as a signal peptide. 2 consecutive WAP domains span residues glycine 28–cysteine 69 and proline 72–valine 122. Cystine bridges form between cysteine 35/cysteine 61, cysteine 44/cysteine 65, cysteine 48/cysteine 60, cysteine 54/cysteine 69, cysteine 79/cysteine 109, cysteine 92/cysteine 113, cysteine 96/cysteine 108, and cysteine 102/cysteine 118.

Homotrimer; disulfide-linked. Detected in the distal parts of the epididymis.

Its subcellular location is the secreted. In terms of biological role, broad range protease inhibitor. The chain is WAP four-disulfide core domain protein 2 (WFDC2) from Sus scrofa (Pig).